Here is a 232-residue protein sequence, read N- to C-terminus: 5'-methylthioadenosine/S-adenosylhomocysteine nucleosidase (232 aa).

Residue E12 is the Proton acceptor of the active site. Residues G78, I152, and 173–174 (ME) each bind substrate. D197 acts as the Proton donor in catalysis.

It belongs to the PNP/UDP phosphorylase family. MtnN subfamily. In terms of assembly, homodimer.

The enzyme catalyses S-adenosyl-L-homocysteine + H2O = S-(5-deoxy-D-ribos-5-yl)-L-homocysteine + adenine. It carries out the reaction S-methyl-5'-thioadenosine + H2O = 5-(methylsulfanyl)-D-ribose + adenine. The catalysed reaction is 5'-deoxyadenosine + H2O = 5-deoxy-D-ribose + adenine. The protein operates within amino-acid biosynthesis; L-methionine biosynthesis via salvage pathway; S-methyl-5-thio-alpha-D-ribose 1-phosphate from S-methyl-5'-thioadenosine (hydrolase route): step 1/2. Catalyzes the irreversible cleavage of the glycosidic bond in both 5'-methylthioadenosine (MTA) and S-adenosylhomocysteine (SAH/AdoHcy) to adenine and the corresponding thioribose, 5'-methylthioribose and S-ribosylhomocysteine, respectively. Also cleaves 5'-deoxyadenosine, a toxic by-product of radical S-adenosylmethionine (SAM) enzymes, into 5-deoxyribose and adenine. Thus, is required for in vivo function of the radical SAM enzymes biotin synthase and lipoic acid synthase, that are inhibited by 5'-deoxyadenosine accumulation. In Salmonella dublin (strain CT_02021853), this protein is 5'-methylthioadenosine/S-adenosylhomocysteine nucleosidase.